The following is a 242-amino-acid chain: Lysosomal membrane ascorbate-dependent ferrireductase CYB561A3 (242 aa).

Residues 1–7 (MVSGRFY) lie on the Cytoplasmic side of the membrane. Residues 8-28 (LSCLLLGSLGSMCILFTIYWM) traverse the membrane as a helical segment. The Cytochrome b561 domain occupies 12–219 (LLGSLGSMCI…FGLLVLYILL (208 aa)). The Lumenal portion of the chain corresponds to 29–45 (QYWRGGFAWNGSIYMFN). Asn38 carries an N-linked (GlcNAc...) asparagine glycan. A helical transmembrane segment spans residues 46-66 (WHPVLMVAGMVVFYGGASLVY). Residues His47 and Arg67 each contribute to the heme b site. At 67-83 (RLPQSWVGPKLPWKLLH) the chain is on the cytoplasmic side. Residues Lys76 and Lys80 each contribute to the L-ascorbate site. Position 83 (His83) interacts with heme b. A helical membrane pass occupies residues 84–104 (AALHLMAFVLTVVGLVAVFTF). At 105–119 (HNHGRTANLYSLHSW) the chain is on the lumenal side. Residues 112–115 (NLYS) and His117 each bind heme b. The chain crosses the membrane as a helical span at residues 120 to 140 (LGITTVFLFACQWFLGFAVFL). At 141 to 154 (LPWASMWLRSLLKP) the chain is on the cytoplasmic side. Arg149 serves as a coordination point for L-ascorbate. Residues 155–175 (IHVFFGAAILSLSIASVISGI) traverse the membrane as a helical segment. 2 residues coordinate heme b: His156 and Glu177. Residues 176-202 (NEKLFFSLKNTTRPYHSLPSEAVFANS) lie on the Lumenal side of the membrane. A helical membrane pass occupies residues 203-223 (TGMLVVAFGLLVLYILLASSW). Lys224 contributes to the heme b binding site. Residues 224-242 (KRPEPGILTDRQPLLHDGE) are Cytoplasmic-facing.

As to quaternary structure, homodimer. Requires heme b as cofactor. Post-translationally, N-glycosylated.

The protein resides in the late endosome membrane. Its subcellular location is the lysosome membrane. The catalysed reaction is Fe(3+)(out) + L-ascorbate(in) = monodehydro-L-ascorbate radical(in) + Fe(2+)(out) + H(+). Transmembrane reductase that uses ascorbate as an electron donor in the cytoplasm and transfers electrons across membranes to reduce iron cations Fe(3+) into Fe(2+) in the lumen of the late endosome and lysosome. Reduced iron can then be extruded from the late endosome and lysosome to the cytoplasm by divalent metal-specific transporters. It is therefore most probably involved in endosomal and lysosomal cellular iron homeostasis. The protein is Lysosomal membrane ascorbate-dependent ferrireductase CYB561A3 of Homo sapiens (Human).